We begin with the raw amino-acid sequence, 860 residues long: DNA gyrase subunit A (860 aa).

Positions 34–503 (LPDARDGLKP…EDGELIDTDL (470 aa)) constitute a Topo IIA-type catalytic domain. Tyr122 functions as the O-(5'-phospho-DNA)-tyrosine intermediate in the catalytic mechanism. A GyrA-box motif is present at residues 530-536 (QNRATRG).

The protein belongs to the type II topoisomerase GyrA/ParC subunit family. In terms of assembly, heterotetramer, composed of two GyrA and two GyrB chains. In the heterotetramer, GyrA contains the active site tyrosine that forms a transient covalent intermediate with DNA, while GyrB binds cofactors and catalyzes ATP hydrolysis.

It localises to the cytoplasm. The enzyme catalyses ATP-dependent breakage, passage and rejoining of double-stranded DNA.. A type II topoisomerase that negatively supercoils closed circular double-stranded (ds) DNA in an ATP-dependent manner to modulate DNA topology and maintain chromosomes in an underwound state. Negative supercoiling favors strand separation, and DNA replication, transcription, recombination and repair, all of which involve strand separation. Also able to catalyze the interconversion of other topological isomers of dsDNA rings, including catenanes and knotted rings. Type II topoisomerases break and join 2 DNA strands simultaneously in an ATP-dependent manner. The chain is DNA gyrase subunit A from Synechocystis sp. (strain ATCC 27184 / PCC 6803 / Kazusa).